We begin with the raw amino-acid sequence, 254 residues long: Persulfide dioxygenase ETHE1, mitochondrial (254 aa).

The N-terminal 7 residues, 1-7, are a transit peptide targeting the mitochondrion; sequence MASAVVR. Phosphoserine occurs at positions 14, 17, and 19. An N6-acetyllysine; alternate modification is found at K32. K32 is subject to N6-succinyllysine; alternate. Position 66 is an N6-acetyllysine (K66). Positions 79, 135, and 154 each coordinate Fe cation. K172 carries the N6-acetyllysine; alternate modification. Residue K172 is modified to N6-succinyllysine; alternate.

This sequence belongs to the metallo-beta-lactamase superfamily. Glyoxalase II family. In terms of assembly, homodimer. Monomer. Interacts with TST. May interact with RELA. Fe(2+) serves as cofactor.

Its subcellular location is the cytoplasm. It is found in the nucleus. The protein resides in the mitochondrion matrix. It carries out the reaction S-sulfanylglutathione + O2 + H2O = sulfite + glutathione + 2 H(+). Functionally, first described as a protein that can shuttle between the nucleus and the cytoplasm and suppress p53-induced apoptosis by sequestering the transcription factor RELA/NFKB3 in the cytoplasm and preventing its accumulation in the nucleus. Sulfur dioxygenase that plays an essential role in hydrogen sulfide catabolism in the mitochondrial matrix. Hydrogen sulfide (H(2)S) is first oxidized by SQRDL, giving rise to cysteine persulfide residues. ETHE1 consumes molecular oxygen to catalyze the oxidation of the persulfide, once it has been transferred to a thiophilic acceptor, such as glutathione (R-SSH). Plays an important role in metabolic homeostasis in mitochondria by metabolizing hydrogen sulfide and preventing the accumulation of supraphysiological H(2)S levels that have toxic effects, due to the inhibition of cytochrome c oxidase. The chain is Persulfide dioxygenase ETHE1, mitochondrial (Ethe1) from Mus musculus (Mouse).